The chain runs to 329 residues: GTP 3',8-cyclase (329 aa).

The Radical SAM core domain occupies 1-229; the sequence is MNQIDYLRIS…EGQVRGNGPA (229 aa). Residue Arg-8 participates in GTP binding. [4Fe-4S] cluster contacts are provided by Cys-15 and Cys-19. Tyr-21 is an S-adenosyl-L-methionine binding site. Cys-22 lines the [4Fe-4S] cluster pocket. Arg-60 lines the GTP pocket. Gly-64 is an S-adenosyl-L-methionine binding site. GTP is bound at residue Thr-91. Ser-115 contacts S-adenosyl-L-methionine. Residue Lys-155 coordinates GTP. Met-189 provides a ligand contact to S-adenosyl-L-methionine. Positions 252 and 255 each coordinate [4Fe-4S] cluster. 257–259 contacts GTP; it reads RLR. Cys-269 contacts [4Fe-4S] cluster.

The protein belongs to the radical SAM superfamily. MoaA family. As to quaternary structure, monomer and homodimer. It depends on [4Fe-4S] cluster as a cofactor.

The enzyme catalyses GTP + AH2 + S-adenosyl-L-methionine = (8S)-3',8-cyclo-7,8-dihydroguanosine 5'-triphosphate + 5'-deoxyadenosine + L-methionine + A + H(+). Its pathway is cofactor biosynthesis; molybdopterin biosynthesis. In terms of biological role, catalyzes the cyclization of GTP to (8S)-3',8-cyclo-7,8-dihydroguanosine 5'-triphosphate. The polypeptide is GTP 3',8-cyclase (Microcystis aeruginosa (strain NIES-843 / IAM M-2473)).